Reading from the N-terminus, the 185-residue chain is Putative lipoprotein LprB (185 aa).

Positions Met1–Gly24 are cleaved as a signal peptide. Residue Cys25 is the site of N-palmitoyl cysteine attachment. Residue Cys25 is the site of S-diacylglycerol cysteine attachment. The disordered stretch occupies residues Ser26–Pro50.

The protein resides in the cell membrane. This Mycobacterium bovis (strain ATCC BAA-935 / AF2122/97) protein is Putative lipoprotein LprB (lprB).